Here is a 253-residue protein sequence, read N- to C-terminus: HTH-type transcriptional regulator YdeO (253 aa).

In terms of domain architecture, HTH araC/xylS-type spans 137–233; it reads GKVRNIVNMK…GNSPKRVSKE (97 aa). 2 DNA-binding regions (H-T-H motif) span residues 154-175 and 200-223; these read KDIC…KQEQ and VNKI…RKHF.

In terms of biological role, induces the expression of gadE. Could also regulate the expression of other genes involved in acid resistance. This is HTH-type transcriptional regulator YdeO (ydeO) from Shigella flexneri.